A 183-amino-acid polypeptide reads, in one-letter code: Putative manganese efflux pump MntP (183 aa).

The next 6 helical transmembrane spans lie at 3–23 (TISV…LSIY), 43–63 (TFGI…ILFI), 66–86 (ISLY…LMML), 107–127 (LIIM…TFSI), 134–154 (FLYT…GFIL), and 161–181 (ILGQ…SINI).

It belongs to the MntP (TC 9.B.29) family.

The protein resides in the cell inner membrane. Functionally, probably functions as a manganese efflux pump. The chain is Putative manganese efflux pump MntP from Fusobacterium nucleatum subsp. nucleatum (strain ATCC 25586 / DSM 15643 / BCRC 10681 / CIP 101130 / JCM 8532 / KCTC 2640 / LMG 13131 / VPI 4355).